We begin with the raw amino-acid sequence, 436 residues long: Gamma-glutamyl phosphate reductase (436 aa).

Belongs to the gamma-glutamyl phosphate reductase family.

The protein localises to the cytoplasm. It carries out the reaction L-glutamate 5-semialdehyde + phosphate + NADP(+) = L-glutamyl 5-phosphate + NADPH + H(+). The protein operates within amino-acid biosynthesis; L-proline biosynthesis; L-glutamate 5-semialdehyde from L-glutamate: step 2/2. Its function is as follows. Catalyzes the NADPH-dependent reduction of L-glutamate 5-phosphate into L-glutamate 5-semialdehyde and phosphate. The product spontaneously undergoes cyclization to form 1-pyrroline-5-carboxylate. This Prochlorococcus marinus (strain MIT 9312) protein is Gamma-glutamyl phosphate reductase.